Here is a 286-residue protein sequence, read N- to C-terminus: Aquaporin NIP1-3 (286 aa).

The disordered stretch occupies residues 1-44; sequence MAGGEHGVNGQHEETRAMEEGSRDHQARCENSEQDGGSKSSSNN. Positions 11–31 are enriched in basic and acidic residues; sequence QHEETRAMEEGSRDHQARCEN. The segment covering 34–44 has biased composition (polar residues); the sequence is QDGGSKSSSNN. Helical transmembrane passes span 56–76 and 84–104; these read VIAE…AVAV and VTFP…VYSV. The short motif at 113-115 is the NPA 1 element; the sequence is NPA. 3 helical membrane passes run 131–153, 172–192, and 200–220; these read VPAY…RALF, SLAM…GVAT, and LAGL…GPIS. Positions 225–227 match the NPA 2 motif; sequence NPA. Residues 239 to 259 traverse the membrane as a helical segment; the sequence is YTGIWVYIAGPVFGAVAGAWA.

It belongs to the MIP/aquaporin (TC 1.A.8) family. NIP (TC 1.A.8.12) subfamily.

Its subcellular location is the membrane. Functionally, aquaporins facilitate the transport of water and small neutral solutes across cell membranes. The sequence is that of Aquaporin NIP1-3 (NIP1-3) from Oryza sativa subsp. japonica (Rice).